Here is a 269-residue protein sequence, read N- to C-terminus: Endo-1,3-1,4-beta-glycanase ExoK (269 aa).

The first 29 residues, 1 to 29, serve as a signal peptide directing secretion; sequence MTIDRYRRFARLAFIATLPLAGLATAAAA. Residues 40-252 form the GH16 domain; it reads DDFDTLDTRV…RVAFTAAGDE (213 aa). Catalysis depends on E138, which acts as the Nucleophile. E142 (proton donor) is an active-site residue.

Belongs to the glycosyl hydrolase 16 family.

It is found in the secreted. The protein operates within glycan metabolism; exopolysaccharide biosynthesis. Its function is as follows. Cleaves high molecular weight succinoglycan to yield LMW succinoglycan. Dynamically regulates the molecular weight distribution of succinoglycan by cleaving nascent succinoglycan only during a limited period after its synthesis, perhaps before it undergoes a time-dependent change in its conformation or aggregation state. This is Endo-1,3-1,4-beta-glycanase ExoK (exoK) from Rhizobium meliloti (strain 1021) (Ensifer meliloti).